The chain runs to 386 residues: O-phospho-L-seryl-tRNA:Cys-tRNA synthase (386 aa).

Pyridoxal 5'-phosphate is bound by residues 89 to 90 (AR), Asn-196, and 219 to 221 (SGH). Lys-222 bears the N6-(pyridoxal phosphate)lysine mark.

The protein belongs to the SepCysS family. Homodimer. Interacts with SepRS. The cofactor is pyridoxal 5'-phosphate.

It carries out the reaction O-phospho-L-seryl-tRNA(Cys) + hydrogen sulfide + H(+) = L-cysteinyl-tRNA(Cys) + phosphate. In terms of biological role, converts O-phospho-L-seryl-tRNA(Cys) (Sep-tRNA(Cys)) to L-cysteinyl-tRNA(Cys) (Cys-tRNA(Cys)). This is O-phospho-L-seryl-tRNA:Cys-tRNA synthase from Methanosarcina acetivorans (strain ATCC 35395 / DSM 2834 / JCM 12185 / C2A).